The following is a 526-amino-acid chain: ATP synthase subunit alpha 2 (526 aa).

An ATP-binding site is contributed by 171–178; sequence GDRQTGKT.

This sequence belongs to the ATPase alpha/beta chains family. F-type ATPases have 2 components, CF(1) - the catalytic core - and CF(0) - the membrane proton channel. CF(1) has five subunits: alpha(3), beta(3), gamma(1), delta(1), epsilon(1). CF(0) has four main subunits: a(1), b(1), b'(1) and c(9-12).

The protein localises to the cell inner membrane. The catalysed reaction is ATP + H2O + 4 H(+)(in) = ADP + phosphate + 5 H(+)(out). Produces ATP from ADP in the presence of a proton gradient across the membrane. The alpha chain is a regulatory subunit. The protein is ATP synthase subunit alpha 2 of Chlorobium luteolum (strain DSM 273 / BCRC 81028 / 2530) (Pelodictyon luteolum).